Here is a 480-residue protein sequence, read N- to C-terminus: Proline--tRNA ligase (480 aa).

This sequence belongs to the class-II aminoacyl-tRNA synthetase family. ProS type 3 subfamily. As to quaternary structure, homodimer.

It localises to the cytoplasm. The catalysed reaction is tRNA(Pro) + L-proline + ATP = L-prolyl-tRNA(Pro) + AMP + diphosphate. Functionally, catalyzes the attachment of proline to tRNA(Pro) in a two-step reaction: proline is first activated by ATP to form Pro-AMP and then transferred to the acceptor end of tRNA(Pro). The polypeptide is Proline--tRNA ligase (Pyrococcus abyssi (strain GE5 / Orsay)).